Here is a 408-residue protein sequence, read N- to C-terminus: Solute carrier family 35 member F1 (408 aa).

The tract at residues 1–21 (MIPPEQPQQQLQPPSPAPPNH) is disordered. 10 helical membrane-spanning segments follow: residues 60–80 (MLIS…IGLT), 94–114 (VFQS…TLAV), 129–147 (WWKY…YLVV), 158–178 (IQLL…FFLL), 186–206 (FIGI…DVLV), 221–241 (LLVL…EYII), 247–267 (VEFL…QLAI), 284–304 (LLYV…PVVI), 311–331 (SVNL…LFLF), and 335–355 (FSGL…LYSS).

This sequence belongs to the SLC35F solute transporter family.

The protein localises to the cytoplasmic vesicle. It localises to the secretory vesicle. It is found in the synaptic vesicle membrane. Its function is as follows. Putative solute transporter. In Homo sapiens (Human), this protein is Solute carrier family 35 member F1 (SLC35F1).